The sequence spans 363 residues: 1-aminocyclopropane-1-carboxylate oxidase homolog (363 aa).

A Fe2OG dioxygenase domain is found at 212–312; that stretch reads FHLFCSCNYY…MSITCFFGES (101 aa). The Fe cation site is built by histidine 236, aspartate 238, and histidine 292.

It belongs to the iron/ascorbate-dependent oxidoreductase family.

The sequence is that of 1-aminocyclopropane-1-carboxylate oxidase homolog (ACO3) from Solanum lycopersicum (Tomato).